The primary structure comprises 149 residues: Transcription factor MafF (149 aa).

The basic motif stretch occupies residues 51-76 (RLKQRRRTLKNRGYAASCRVKRVCQK). The bZIP domain maps to 51-114 (RLKQRRRTLK…DTLRGKYEAL (64 aa)). Residues 79–93 (LQKQKMELEWEVDKL) form a leucine-zipper region.

The protein belongs to the bZIP family. Maf subfamily. In terms of assembly, monomer and homo- or heterodimer. In terms of tissue distribution, highly expressed in the ovary, lower expression in the brain, heart and mesenterium.

The protein localises to the nucleus. In terms of biological role, since it lacks a putative transactivation domain, it may behave as a transcriptional repressor when it dimerizes among itself. May also serve as a transcriptional activator by dimerizing with other (usually larger) basic-zipper proteins and recruiting them to specific DNA-binding sites. May be involved in the cellular stress response. The chain is Transcription factor MafF (MAFF) from Gallus gallus (Chicken).